Here is a 297-residue protein sequence, read N- to C-terminus: 4-diphosphocytidyl-2-C-methyl-D-erythritol kinase (297 aa).

Residues K6 and D144 contribute to the active site.

It belongs to the GHMP kinase family. IspE subfamily.

The catalysed reaction is 4-CDP-2-C-methyl-D-erythritol + ATP = 4-CDP-2-C-methyl-D-erythritol 2-phosphate + ADP + H(+). It functions in the pathway isoprenoid biosynthesis; isopentenyl diphosphate biosynthesis via DXP pathway; isopentenyl diphosphate from 1-deoxy-D-xylulose 5-phosphate: step 3/6. In terms of biological role, catalyzes the phosphorylation of the position 2 hydroxy group of 4-diphosphocytidyl-2C-methyl-D-erythritol. In Leptospira interrogans serogroup Icterohaemorrhagiae serovar Lai (strain 56601), this protein is 4-diphosphocytidyl-2-C-methyl-D-erythritol kinase.